We begin with the raw amino-acid sequence, 214 residues long: UPF0690 protein C1orf52 homolog (214 aa).

2 disordered regions span residues 1 to 66 and 81 to 214; these read MSDE…SVSK and DSRA…QCLD. Residues 32-44 show a composition bias toward low complexity; sequence PEATASSAPAEPQ. 2 stretches are compositionally biased toward basic and acidic residues: residues 49 to 61 and 81 to 97; these read RAAE…DELF and DSRA…EFKV. A compositionally biased stretch (acidic residues) spans 152-165; the sequence is EEEEEEQQPDSDDD. Ser162 carries the phosphoserine modification. 2 stretches are compositionally biased toward basic and acidic residues: residues 179–192 and 200–214; these read VETF…KRDI and NFVE…QCLD.

It belongs to the UPF0690 family.

The chain is UPF0690 protein C1orf52 homolog from Danio rerio (Zebrafish).